A 258-amino-acid chain; its full sequence is TLC domain-containing protein 4-A (258 aa).

A run of 6 helical transmembrane segments spans residues 5–25 (LISY…FSAI), 52–72 (FVST…LAYD), 85–105 (FWVK…LLLL), 116–132 (YMVC…GYVL), 171–191 (PVLL…IAVI), and 212–232 (IGPQ…NVFW). In terms of domain architecture, TLC spans 43 to 245 (GKQCEWDSRF…IARGFYKVVK (203 aa)).

It belongs to the TLCD4 family.

Its subcellular location is the membrane. The sequence is that of TLC domain-containing protein 4-A (tlcd4-a) from Xenopus laevis (African clawed frog).